The sequence spans 135 residues: HTH-type transcriptional repressor RghR (135 aa).

One can recognise an HTH cro/C1-type domain in the interval 8–63 (LRALREERKLTVNQLATYSGVSAAGISRIENGKRGVPKPATIKKLAEALKIPYEGL). The segment at residues 19-38 (VNQLATYSGVSAAGISRIEN) is a DNA-binding region (H-T-H motif).

Its function is as follows. Represses the expression of yvaM and both rapG and rapH. Binds directly to the promoter regions of yvaM, rapG and rapH. In Bacillus subtilis (strain 168), this protein is HTH-type transcriptional repressor RghR (rghR).